The chain runs to 298 residues: tRNA pseudouridine synthase B (298 aa).

Aspartate 44 serves as the catalytic Nucleophile.

This sequence belongs to the pseudouridine synthase TruB family. Type 1 subfamily.

It catalyses the reaction uridine(55) in tRNA = pseudouridine(55) in tRNA. In terms of biological role, responsible for synthesis of pseudouridine from uracil-55 in the psi GC loop of transfer RNAs. The polypeptide is tRNA pseudouridine synthase B (Mycobacteroides abscessus (strain ATCC 19977 / DSM 44196 / CCUG 20993 / CIP 104536 / JCM 13569 / NCTC 13031 / TMC 1543 / L948) (Mycobacterium abscessus)).